The following is a 233-amino-acid chain: tRNA (guanine-N(7)-)-methyltransferase (233 aa).

Residues 1-36 are disordered; the sequence is MSEFDPNPPRRNFYGRRHGKTLRQSQKGYLSEDLGS. Residues glutamate 68, glutamate 93, aspartate 120, and aspartate 142 each coordinate S-adenosyl-L-methionine. Aspartate 142 is a catalytic residue. Substrate-binding positions include lysine 146, aspartate 178, and 211-214; that span reads TRYE.

The protein belongs to the class I-like SAM-binding methyltransferase superfamily. TrmB family.

It catalyses the reaction guanosine(46) in tRNA + S-adenosyl-L-methionine = N(7)-methylguanosine(46) in tRNA + S-adenosyl-L-homocysteine. Its pathway is tRNA modification; N(7)-methylguanine-tRNA biosynthesis. Functionally, catalyzes the formation of N(7)-methylguanine at position 46 (m7G46) in tRNA. The protein is tRNA (guanine-N(7)-)-methyltransferase of Paracoccus denitrificans (strain Pd 1222).